The chain runs to 558 residues: Hepatocyte nuclear factor 1-beta (558 aa).

The dimerization stretch occupies residues Met-1–Glu-31. The HNF-p1 domain maps to Met-1–Glu-32. Residues Ser-49, Ser-52, Ser-75, and Ser-80 each carry the phosphoserine modification. Residues Thr-66–Asp-85 are disordered. The 96-residue stretch at Lys-93–Gln-188 folds into the POU-specific atypical domain. Positions Met-231 to Gln-311 form a DNA-binding region, homeobox; HNF1-type. Positions Thr-323–Ser-348 are disordered.

Belongs to the HNF1 homeobox family. In terms of assembly, binds DNA as a dimer. Can form homodimer or heterodimer with HNF1-alpha. Interacts (via HNF-p1 domain) with PCBD1; the interaction increases its transactivation activity.

Its subcellular location is the nucleus. Functionally, transcription factor that binds to the inverted palindrome 5'-GTTAATNATTAAC-3'. Binds to the FPC element in the cAMP regulatory unit of the PLAU gene. Transcriptional activity is increased by coactivator PCBD1. In Mus musculus (Mouse), this protein is Hepatocyte nuclear factor 1-beta (Hnf1b).